The primary structure comprises 1487 residues: MITRWLLITSFLALAILSLSSAAKKSEPEITPSSFDNEPFSLFYFEDTETILMNTRDGNLFRSFDGGKGWEQVDDPNGKMKKGVRSIWQHPFDKNRAYALGANRRHWVTKDQAKTWESFEVDGYAATQHEPLIFHGWDSSKVIFQSDECMGRFCIVKSYYSTDDFKTVSPLRVSAGGCAWAVGHPQFAEGLNLEDELRDRVLCIVPGLKVPSAHANRLVYSDDFFRSDAEGTELNIQQGRPVSGILSAAAVKKFFVTAAKSQGTNELALYVTLDTKAWHRADFGGHRVEQDGYTLLESTNYSMQVDVLTSPSSNTGILFTSNSNGTYFTRNVEHTNRDRFGHVDFEKIADIQGIVLVNTVKNWDKVGSENEKKVVSSISFDDGRTFQSLKVGDKQLHLHSVTTFANTGRVFSSPAPGLVMGVGNTGDHLKKYSEGSLYVSDDAGVTWRHALDGPFKYEFGDQGSVIMAVSDKGTTDEIQFSIDHGKEWHSTKLQHKIYPKLLTTTPDSTSLTFLLVGSEESSGTKHVVYSIDFRGLHERKCEKDDFEKWAARLNENGEPDCLMGHQQFFNRRKANADCFVDEEFKDPQPIFEPCKCSFEDFECDFNFVRSEDGKSCVPAAPLVPPVGRCQKQTDTFMGPSGWRLIPGNTCTREGGENLDKDVERPCKDVVSAPSHDKLMAQKQVFNDARQFSEQYYYLERQASSSGDDETVIMLTSEGEFWVSHDHGKNWEQPLKGVKIAAIVPHPYYSDGAFLLTRDKQAFWTVDRAYTFKSFEAPIPPNQEGLPVLSFHPQYKDWLIWTGAVDCAHGDCHSDAYFSKNRGENWDLLLRYVGKCEFESRENRPGSEKLIFCQQYENENKKNHLQLLSSENLFSDSHVHFNDAIRYATMSEYIIVASRDPDNPDSLVASVSVDGRTFARAEFPPNVDVPVKTAFTVLDSSTHAVFLHVTVSDVKGAEHGSIIKSNSNGTSYVLSLNAASRNEWGYVDFEKMQGLEGVAVVNIISNVEAVLKKGPTAKKLKTMITHNDGGQWMLLPPPAKDADGKNFGCSVKGGKGSGQCSLHLHGYTERRDPRDTFSSGSAIGLMMGIGNVGAHLSGKDEADTFMTRDGGITWKSVKKGRYMWEYGDSGSVIVIVPELRPTKVLYYSLDEGDNWEPYEFSEVEMHIYRLSTVPSDTSKNFLLWGKEVESNRLATINVDFSGLRKKSCNLVENGQESDDYYLWEPKHPFQEDNCLFGHVEQYHRKKPSSQCWNNWREPHVHSIGRNCTCTRADYECNYNYEPQNDGSCALVPGLPKPDALAVCREDPDRVEYWEPTAYRRIPQTTCAGGLILDHVVSKPCPSKEKEYEKKHGISGTGLFFAIMIPIVAAAGVGYYVYAKWDGKFGQIRLGENAGTYEGLLSRESPIVTVPIAVIAGIVAVIRALPLLAMSLWRSASGYVRLGRNRAYSRPYASRGSFAARRGDYTSVVDDEDELLGVDDAEIDEDDEL.

The signal sequence occupies residues 1-22; it reads MITRWLLITSFLALAILSLSSA. Residues 23 to 1356 are Lumenal-facing; that stretch reads AKKSEPEITP…EKKHGISGTG (1334 aa). The BNR 1 repeat unit spans residues 61–71; it reads FRSFDGGKGWE. Residues Asn-300 and Asn-324 are each glycosylated (N-linked (GlcNAc...) asparagine). 5 BNR repeats span residues 378 to 387, 438 to 448, 479 to 489, 721 to 731, and 816 to 826; these read ISFDDGRTFQ, YVSDDAGVTWR, QFSIDHGKEWH, WVSHDHGKNWE, and YFSKNRGENWD. Residue Asn-967 is glycosylated (N-linked (GlcNAc...) asparagine). BNR repeat units follow at residues 1104–1114 and 1145–1155; these read FMTRDGGITWK and YYSLDEGDNWE. N-linked (GlcNAc...) asparagine glycosylation is present at Asn-1265. Residues 1357 to 1377 traverse the membrane as a helical segment; the sequence is LFFAIMIPIVAAAGVGYYVYA. The Cytoplasmic portion of the chain corresponds to 1378–1404; the sequence is KWDGKFGQIRLGENAGTYEGLLSRESP. The helical transmembrane segment at 1405–1425 threads the bilayer; that stretch reads IVTVPIAVIAGIVAVIRALPL. Over 1426-1487 the chain is Lumenal; it reads LAMSLWRSAS…DAEIDEDDEL (62 aa).

It belongs to the VPS10-related sortilin family.

It is found in the golgi apparatus. Its subcellular location is the trans-Golgi network membrane. The protein resides in the prevacuolar compartment membrane. Functionally, functions as a sorting receptor in the Golgi compartment required for the intracellular sorting and delivery of soluble vacuolar proteins, like carboxypeptidase Y (CPY) and proteinase A. Executes multiple rounds of sorting by cycling between the late Golgi and a prevacuolar endosome-like compartment. This Neosartorya fischeri (strain ATCC 1020 / DSM 3700 / CBS 544.65 / FGSC A1164 / JCM 1740 / NRRL 181 / WB 181) (Aspergillus fischerianus) protein is Vacuolar protein sorting/targeting protein 10 (vps10).